The primary structure comprises 421 residues: TITAN-like protein (421 aa).

The C2H2-type 1; degenerate zinc-finger motif lies at 11–32 (EFCTVCRFHHDQGSRHKYFPRH). A C2H2-type 2; degenerate zinc finger spans residues 70 to 100 (VWCVFCDEDIVELGSSFACSKAINHFASSDH). The segment at 279 to 306 (ISSSHSTDAGGNVHSGAPPPWLDANDGD) is disordered. 2 consecutive short sequence motifs (nuclear localization signal) follow at residues 328–335 (NRKLNPNR) and 377–384 (TRKESRKE). Residues 376-421 (GTRKESRKEFEKEKRKLVKTESISTESEPVKIQPYISKRARRESGE) are disordered. The segment covering 377–389 (TRKESRKEFEKEK) has biased composition (basic and acidic residues).

As to expression, also present in cotyledons, hypocotyls, stems, veins of sepals and stigmas, and actively dividing tissues such as shoot apical meristem, root tips and emerging true leaves. Weak expression in petals and anthers, and not detected in mature leaves. In seeds, expressed in both the endosperm and embryo.

Its subcellular location is the nucleus. In terms of biological role, key regulator for endosperm and embryo nuclear divisions. This is TITAN-like protein from Arabidopsis thaliana (Mouse-ear cress).